Here is a 65-residue protein sequence, read N- to C-terminus: Gallinacin-1 (65 aa).

The signal sequence occupies residues 1 to 19 (MRIVYLLLPFILLLAQGAA). The propeptide occupies 20-25 (GSSQAL). Disulfide bonds link Cys-31/Cys-59, Cys-38/Cys-53, and Cys-43/Cys-60.

This sequence belongs to the beta-defensin family. In terms of tissue distribution, strong expression in the bone marrow, lung, testis. Moderate expression in the bursa and intestine. Low expression in the cloaca, gall bladder, brain and pancreas. Expressed in the vagina, ovarian stroma and the theca and granulosa layers of the ovarian follicle.

Its subcellular location is the secreted. The protein localises to the cytoplasmic granule. Has bactericidal activity. Potent activity against E.coli ML-35, L.monocytogenes EGD and C.albicans. This Gallus gallus (Chicken) protein is Gallinacin-1 (GAL1).